A 90-amino-acid polypeptide reads, in one-letter code: MIDLVKYPVITEKSCRLIEKNQYTFDVDLRLTKPQIKELIEGFFDVNVTAVNTHRPPRKKRRMGLRVGYKPRYKRVIVTIKADQSIPIFA.

The protein belongs to the universal ribosomal protein uL23 family. As to quaternary structure, part of the 50S ribosomal subunit.

It is found in the plastid. The protein localises to the chloroplast. In terms of biological role, binds to 23S rRNA. This is Large ribosomal subunit protein uL23c (rpl23) from Oltmannsiellopsis viridis (Marine flagellate).